A 132-amino-acid chain; its full sequence is ATP synthase epsilon chain (132 aa).

Belongs to the ATPase epsilon chain family. F-type ATPases have 2 components, CF(1) - the catalytic core - and CF(0) - the membrane proton channel. CF(1) has five subunits: alpha(3), beta(3), gamma(1), delta(1), epsilon(1). CF(0) has three main subunits: a, b and c.

The protein resides in the cell inner membrane. Functionally, produces ATP from ADP in the presence of a proton gradient across the membrane. This is ATP synthase epsilon chain from Parvibaculum lavamentivorans (strain DS-1 / DSM 13023 / NCIMB 13966).